Here is a 615-residue protein sequence, read N- to C-terminus: uncharacterized protein (615 aa).

A Phosphoserine modification is found at S48. Over residues 424-433 the composition is skewed to acidic residues; that stretch reads DRENELEEGS. Residues 424-615 form a disordered region; it reads DRENELEEGS…YARKKTKKNV (192 aa). Basic and acidic residues-rich tracts occupy residues 439 to 476, 484 to 496, 504 to 521, and 529 to 561; these read DNER…KEVG, DGNK…KEVA, ESEK…KEVA, and ESEK…EPSK. Basic residues-rich tracts occupy residues 579 to 589 and 606 to 615; these read KKPKVVKKVAK and YARKKTKKNV.

This is an uncharacterized protein from Arabidopsis thaliana (Mouse-ear cress).